The following is a 200-amino-acid chain: 3-isopropylmalate dehydratase small subunit (200 aa).

The protein belongs to the LeuD family. LeuD type 1 subfamily. Heterodimer of LeuC and LeuD.

The enzyme catalyses (2R,3S)-3-isopropylmalate = (2S)-2-isopropylmalate. Its pathway is amino-acid biosynthesis; L-leucine biosynthesis; L-leucine from 3-methyl-2-oxobutanoate: step 2/4. Its function is as follows. Catalyzes the isomerization between 2-isopropylmalate and 3-isopropylmalate, via the formation of 2-isopropylmaleate. The protein is 3-isopropylmalate dehydratase small subunit of Campylobacter jejuni subsp. jejuni serotype O:6 (strain 81116 / NCTC 11828).